A 642-amino-acid polypeptide reads, in one-letter code: Epithelial sodium channel subunit alpha (642 aa).

Topologically, residues 1–81 (MHQVVTVKAE…VCSKRNKMKT (81 aa)) are cytoplasmic. Residues 82-102 (AFWSVLFFLTFGLMYWQFGIL) traverse the membrane as a helical segment. Residues 103-553 (YREYFSFPVN…NQWSLWFGSS (451 aa)) are Extracellular-facing. 10 cysteine pairs are disulfide-bonded: Cys-130-Cys-297, Cys-222-Cys-229, Cys-274-Cys-281, Cys-385-Cys-470, Cys-407-Cys-447, Cys-407-Cys-466, Cys-411-Cys-462, Cys-420-Cys-447, Cys-420-Cys-470, and Cys-422-Cys-436. The interval 170–209 (GAAQSSQKRSQRSLSHHVQRHPLRRRKRNEPVSLKGNSPP) is disordered. A compositionally biased stretch (basic residues) spans 178-197 (RSQRSLSHHVQRHPLRRRKR). A helical transmembrane segment spans residues 554 to 574 (VLSVVELAELILDFIAITIIL). The Cytoplasmic portion of the chain corresponds to 575 to 642 (SFKRFRSRQV…RDGEAVIGLE (68 aa)). Positions 587–608 (PSVPPPGAHDNTAFQSEPADPS) are disordered.

It belongs to the amiloride-sensitive sodium channel (TC 1.A.6) family. SCNN1A subfamily. In terms of assembly, heterotrimer; disulfide-linked and containing an alpha/SCNN1A, a beta/SCNN1B and a gamma/SCNN1G subunit.

The protein resides in the apical cell membrane. It is found in the cell projection. It localises to the cilium. The protein localises to the cytoplasmic granule. Its subcellular location is the cytoplasm. The protein resides in the cytoplasmic vesicle. It is found in the secretory vesicle. It localises to the acrosome. The protein localises to the flagellum. It carries out the reaction Na(+)(in) = Na(+)(out). Originally identified and characterized by its inhibition by the diuretic drug amiloride. In terms of biological role, this is one of the three pore-forming subunits of the heterotrimeric epithelial sodium channel (ENaC), a critical regulator of sodium balance and fluid homeostasis. ENaC operates in epithelial tissues, where it mediates the electrodiffusion of sodium ions from extracellular fluid through the apical membrane of cells, with water following osmotically. The chain is Epithelial sodium channel subunit alpha from Pelodiscus sinensis (Chinese softshell turtle).